The following is a 393-amino-acid chain: NAD(P)H-quinone oxidoreductase subunit H, chloroplastic (393 aa).

Belongs to the complex I 49 kDa subunit family. As to quaternary structure, NDH is composed of at least 16 different subunits, 5 of which are encoded in the nucleus.

Its subcellular location is the plastid. It localises to the chloroplast thylakoid membrane. The enzyme catalyses a plastoquinone + NADH + (n+1) H(+)(in) = a plastoquinol + NAD(+) + n H(+)(out). It catalyses the reaction a plastoquinone + NADPH + (n+1) H(+)(in) = a plastoquinol + NADP(+) + n H(+)(out). Functionally, NDH shuttles electrons from NAD(P)H:plastoquinone, via FMN and iron-sulfur (Fe-S) centers, to quinones in the photosynthetic chain and possibly in a chloroplast respiratory chain. The immediate electron acceptor for the enzyme in this species is believed to be plastoquinone. Couples the redox reaction to proton translocation, and thus conserves the redox energy in a proton gradient. The polypeptide is NAD(P)H-quinone oxidoreductase subunit H, chloroplastic (Psilotum nudum (Whisk fern)).